Reading from the N-terminus, the 610-residue chain is UvrABC system protein C (610 aa).

A GIY-YIG domain is found at 12–91 (TSPGVYLYKN…IKQKKPRFNI (80 aa)). The UVR domain occupies 202–237 (SDLKQSLTARMNKAAEGMQFELAAKYRDLITTVEDL).

This sequence belongs to the UvrC family. In terms of assembly, interacts with UvrB in an incision complex.

The protein resides in the cytoplasm. In terms of biological role, the UvrABC repair system catalyzes the recognition and processing of DNA lesions. UvrC both incises the 5' and 3' sides of the lesion. The N-terminal half is responsible for the 3' incision and the C-terminal half is responsible for the 5' incision. The protein is UvrABC system protein C of Koribacter versatilis (strain Ellin345).